The chain runs to 514 residues: Putative GTP-binding protein 6 (514 aa).

Residues 48-71 are disordered; sequence WAGGGPVRGGGEEDPREDEEEEED. Residues 59-71 show a composition bias toward acidic residues; the sequence is EEDPREDEEEEED. The 165-residue stretch at 285–449 folds into the Hflx-type G domain; that stretch reads PVVSVVGYTN…ALEASVLRAT (165 aa). The Mg(2+) site is built by threonine 298 and threonine 319.

It belongs to the TRAFAC class OBG-HflX-like GTPase superfamily. HflX GTPase family. Requires Mg(2+) as cofactor.

The polypeptide is Putative GTP-binding protein 6 (Gtpbp6) (Mus musculus (Mouse)).